We begin with the raw amino-acid sequence, 497 residues long: Glycerol kinase (497 aa).

Thr-13 is a binding site for ADP. Thr-13, Thr-14, and Ser-15 together coordinate ATP. Thr-13 contacts sn-glycerol 3-phosphate. Arg-17 contacts ADP. Arg-83, Glu-84, and Tyr-135 together coordinate sn-glycerol 3-phosphate. The glycerol site is built by Arg-83, Glu-84, and Tyr-135. A Phosphohistidine; by HPr modification is found at His-231. Asp-245 contacts sn-glycerol 3-phosphate. Glycerol contacts are provided by Asp-245 and Gln-246. The ADP site is built by Thr-267 and Gly-310. The ATP site is built by Thr-267, Gly-310, Gln-314, and Gly-411. ADP contacts are provided by Gly-411 and Asn-415.

It belongs to the FGGY kinase family. In terms of assembly, homotetramer and homodimer (in equilibrium). In terms of processing, the phosphoenolpyruvate-dependent sugar phosphotransferase system (PTS), including enzyme I, and histidine-containing protein (HPr) are required for the phosphorylation, which leads to the activation of the enzyme.

The catalysed reaction is glycerol + ATP = sn-glycerol 3-phosphate + ADP + H(+). It functions in the pathway polyol metabolism; glycerol degradation via glycerol kinase pathway; sn-glycerol 3-phosphate from glycerol: step 1/1. With respect to regulation, activated by phosphorylation and inhibited by fructose 1,6-bisphosphate (FBP). Functionally, key enzyme in the regulation of glycerol uptake and metabolism. Catalyzes the phosphorylation of glycerol to yield sn-glycerol 3-phosphate. The polypeptide is Glycerol kinase (Listeria monocytogenes serotype 4b (strain F2365)).